Reading from the N-terminus, the 63-residue chain is Light-harvesting protein B-800/850 alpha chain (63 aa).

Residues 1–14 (MNNAKMWLVVKPTV) are Cytoplasmic-facing. A helical membrane pass occupies residues 15–35 (GIPLFLVACAIASFLVHLMLV). Residue His-31 participates in a bacteriochlorophyll binding. Residues 36 to 63 (LTTGWMGDYYSGSFEAASLVSNATTLLS) lie on the Periplasmic side of the membrane.

It belongs to the antenna complex alpha subunit family. The core complex is formed by different alpha and beta chains, binding bacteriochlorophyll molecules, and arranged most probably in tetrameric structures disposed around the reaction center. The non-pigmented gamma chains may constitute additional components.

Its subcellular location is the cell inner membrane. Functionally, antenna complexes are light-harvesting systems, which transfer the excitation energy to the reaction centers. In Rhodovulum sulfidophilum (Rhodobacter sulfidophilus), this protein is Light-harvesting protein B-800/850 alpha chain (pucA).